The following is a 444-amino-acid chain: Trigger factor (444 aa).

The PPIase FKBP-type domain occupies 166–251; the sequence is GDQIVIDFKG…VKAVKAPKPA (86 aa).

Belongs to the FKBP-type PPIase family. Tig subfamily.

It localises to the cytoplasm. The catalysed reaction is [protein]-peptidylproline (omega=180) = [protein]-peptidylproline (omega=0). Functionally, involved in protein export. Acts as a chaperone by maintaining the newly synthesized protein in an open conformation. Functions as a peptidyl-prolyl cis-trans isomerase. This chain is Trigger factor, found in Cereibacter sphaeroides (strain ATCC 17025 / ATH 2.4.3) (Rhodobacter sphaeroides).